Reading from the N-terminus, the 202-residue chain is UPF0126 membrane protein YvgT (202 aa).

A run of 6 helical transmembrane segments spans residues 3-23 (WELL…IVAM), 26-46 (EYDI…GGAI), 63-83 (AYFQ…KLLL), 90-110 (GNLS…LYAV), 113-133 (GHPL…GGII), and 160-180 (IVGL…FVLV).

This sequence belongs to the UPF0126 family.

The protein localises to the cell membrane. This Bacillus subtilis (strain 168) protein is UPF0126 membrane protein YvgT (yvgT).